The sequence spans 317 residues: L-lactate dehydrogenase (317 aa).

Residues Val18, Asp39, Lys44, Tyr69, and 83–84 (GA) contribute to the NAD(+) site. Substrate-binding positions include Gln86, Arg92, and 124–127 (NPVD). NAD(+) is bound by residues 122–124 (VTN) and Ser147. 152–155 (DTAR) is a binding site for substrate. Positions 157 and 172 each coordinate beta-D-fructose 1,6-bisphosphate. The active-site Proton acceptor is His179. Phosphotyrosine is present on Tyr225. Residue Thr234 coordinates substrate.

The protein belongs to the LDH/MDH superfamily. LDH family. Homotetramer.

The protein resides in the cytoplasm. The enzyme catalyses (S)-lactate + NAD(+) = pyruvate + NADH + H(+). It participates in fermentation; pyruvate fermentation to lactate; (S)-lactate from pyruvate: step 1/1. Its activity is regulated as follows. Allosterically activated by fructose 1,6-bisphosphate (FBP). Its function is as follows. Catalyzes the conversion of lactate to pyruvate. The chain is L-lactate dehydrogenase from Acetivibrio thermocellus (strain ATCC 27405 / DSM 1237 / JCM 9322 / NBRC 103400 / NCIMB 10682 / NRRL B-4536 / VPI 7372) (Clostridium thermocellum).